A 170-amino-acid chain; its full sequence is uncharacterized protein (170 aa).

A helical membrane pass occupies residues 7–27; sequence LVELLIGLAIISIALNFAVPL.

Its subcellular location is the membrane. This is an uncharacterized protein from Haemophilus influenzae (strain ATCC 51907 / DSM 11121 / KW20 / Rd).